The primary structure comprises 352 residues: MTFVRELEVASQNSRAFNVTLWFIFIFGLLKLVPFALRFLSMVFDLFVLPPVNYAKYGCKAGDYAVVTGASDGIGKEFASQLASKGFNLVLISRTESKLVALKDELEGKFNIKAKILAIDISADSKDNYNKIYSLCDDLPISILVNNVGQSHSIPVPFLATEEEEMRNIITINNTATLMITQIIAPIIIRTVKKHRESGDKKLKSQRGLILTMGSFGGLIPTPLLATYSGSKAFLQNWSSSLAGELAADNVDVELVLSYLVTSAMSKVRRTSMMIPNPRTFVKSTLRNIGRRCGAQDRYGTITPFWSHAIYHFVIEELFGVYARVVNEINYKFHKSIRIRAVRKAVREAKQN.

A helical membrane pass occupies residues 20-40 (TLWFIFIFGLLKLVPFALRFL). NADP(+) is bound by residues valine 66, aspartate 120, asparagine 147, tyrosine 228, lysine 232, valine 261, and serine 263. The Proton donor role is filled by tyrosine 228. The active-site Lowers pKa of active site Tyr is the lysine 232.

This sequence belongs to the short-chain dehydrogenases/reductases (SDR) family.

The protein localises to the endoplasmic reticulum membrane. It catalyses the reaction a very-long-chain (3R)-3-hydroxyacyl-CoA + NADP(+) = a very-long-chain 3-oxoacyl-CoA + NADPH + H(+). It functions in the pathway lipid metabolism; fatty acid biosynthesis. In terms of biological role, component of the microsomal membrane bound fatty acid elongation system, which produces the 26-carbon very long-chain fatty acids (VLCFA) from palmitate. Catalyzes the reduction of the 3-ketoacyl-CoA intermediate that is formed in each cycle of fatty acid elongation. VLCFAs serve as precursors for ceramide and sphingolipids. This Candida glabrata (strain ATCC 2001 / BCRC 20586 / JCM 3761 / NBRC 0622 / NRRL Y-65 / CBS 138) (Yeast) protein is Very-long-chain 3-oxoacyl-CoA reductase.